A 366-amino-acid chain; its full sequence is Transcription factor IIIA (366 aa).

9 C2H2-type zinc fingers span residues 35–59 (YICS…LCKH), 65–89 (FPCK…SLTH), 95–120 (FTCD…NRFH), 127–151 (YVCH…QFSH), 157–181 (YECP…EKVH), 184–210 (YPCK…AECH), 214–236 (AVCD…QKTH), 243–268 (YLCP…QSFH), and 274–298 (FVCE…SVVH). A Phosphoserine; by CK2 modification is found at Ser-38. Residues 299-310 (DPEKRKLKEKCP) show a composition bias toward basic and acidic residues. The tract at residues 299 to 366 (DPEKRKLKEK…SLVLDKLTIQ (68 aa)) is disordered. Residue Ser-336 is modified to Phosphoserine; by CK2; in vitro.

The N-terminus is blocked. Synthesized in oocytes and, in much lower levels, in somatic cells.

The protein resides in the nucleus. Functionally, involved in ribosomal large subunit biogenesis. Acts both as a positive transcription factor for 5S RNA genes, and as a specific RNA binding protein that complexes with 5S RNA in oocytes to form the 7S ribonucleoprotein storage particle. May play an essential role in the developmental change in 5S RNA gene expression. Interacts with the internal control region (ICR) of approximately 50 bases within the 5S RNA genes, is required for correct transcription of these genes by RNA polymerase III. Also binds the transcribed 5S RNA's. The sequence is that of Transcription factor IIIA (gtf3a) from Xenopus laevis (African clawed frog).